The following is a 274-amino-acid chain: Cytochrome b-c1 complex subunit Rieske, mitochondrial (274 aa).

At 79–103 (SHTDVKVPDFYDYRRLEVLDSTKSS) the chain is on the mitochondrial matrix side. The helical transmembrane segment at 104–140 (RESSEARKGFSYLVTAVTTVGVAYAAKNVVTQFISSM) threads the bilayer. Topologically, residues 141-274 (SASADVLAMA…FTGDDVVVVG (134 aa)) are mitochondrial intermembrane. The 86-residue stretch at 187 to 272 (EAAVELSQLR…YEFTGDDVVV (86 aa)) folds into the Rieske domain. Residues Cys217, His219, Cys236, His239, and Ser241 each contribute to the [2Fe-2S] cluster site. Cys222 and Cys238 are joined by a disulfide.

This sequence belongs to the Rieske iron-sulfur protein family. Component of the ubiquinol-cytochrome c oxidoreductase (cytochrome b-c1 complex, complex III, CIII), a multisubunit enzyme composed of 11 subunits. The complex is composed of 3 respiratory subunits cytochrome b, cytochrome c1 and Rieske protein UQCRFS1, 2 core protein subunits UQCRC1/QCR1 and UQCRC2/QCR2, and 6 low-molecular weight protein subunits UQCRH/QCR6, UQCRB/QCR7, UQCRQ/QCR8, UQCR10/QCR9, UQCR11/QCR10 and subunit 9, the cleavage product of Rieske protein UQCRFS1. The complex exists as an obligatory dimer and forms supercomplexes (SCs) in the inner mitochondrial membrane with NADH-ubiquinone oxidoreductase (complex I, CI) and cytochrome c oxidase (complex IV, CIV), resulting in different assemblies (supercomplex SCI(1)III(2)IV(1) and megacomplex MCI(2)III(2)IV(2)). Incorporation of the Rieske protein UQCRFS1 is the penultimate step in complex III assembly. Interacts with TTC19, which is involved in the clearance of UQCRFS1 fragments. As to quaternary structure, component of the ubiquinol-cytochrome c oxidoreductase (cytochrome b-c1 complex, complex III, CIII). Subunit 9 corresponds to the mitochondrial targeting sequence (MTS) of Rieske protein UQCRFS1. It is retained after processing and incorporated inside complex III, where it remains bound to the complex and localizes between the 2 core subunits UQCRC1/QCR1 and UQCRC2/QCR2. [2Fe-2S] cluster is required as a cofactor. Post-translationally, proteolytic processing is necessary for the correct insertion of UQCRFS1 in the complex III dimer. Several fragments are generated during UQCRFS1 insertion, most probably due to the endogenous matrix-processing peptidase (MPP) activity of the 2 core protein subunits UQCRC1/QCR1 and UQCRC2/QCR2, which are homologous to the 2 mitochondrial-processing peptidase (MPP) subunits beta-MPP and alpha-MPP respectively. The action of the protease is also necessary for the clearance of the UQCRFS1 fragments.

The protein localises to the mitochondrion inner membrane. It carries out the reaction a quinol + 2 Fe(III)-[cytochrome c](out) = a quinone + 2 Fe(II)-[cytochrome c](out) + 2 H(+)(out). Its function is as follows. Component of the ubiquinol-cytochrome c oxidoreductase, a multisubunit transmembrane complex that is part of the mitochondrial electron transport chain which drives oxidative phosphorylation. The respiratory chain contains 3 multisubunit complexes succinate dehydrogenase (complex II, CII), ubiquinol-cytochrome c oxidoreductase (cytochrome b-c1 complex, complex III, CIII) and cytochrome c oxidase (complex IV, CIV), that cooperate to transfer electrons derived from NADH and succinate to molecular oxygen, creating an electrochemical gradient over the inner membrane that drives transmembrane transport and the ATP synthase. The cytochrome b-c1 complex catalyzes electron transfer from ubiquinol to cytochrome c, linking this redox reaction to translocation of protons across the mitochondrial inner membrane, with protons being carried across the membrane as hydrogens on the quinol. In the process called Q cycle, 2 protons are consumed from the matrix, 4 protons are released into the intermembrane space and 2 electrons are passed to cytochrome c. The Rieske protein is a catalytic core subunit containing a [2Fe-2S] iron-sulfur cluster. It cycles between 2 conformational states during catalysis to transfer electrons from the quinol bound in the Q(0) site in cytochrome b to cytochrome c1. Incorporation of UQCRFS1 is the penultimate step in complex III assembly. Component of the ubiquinol-cytochrome c oxidoreductase (cytochrome b-c1 complex, complex III, CIII). UQCRFS1 undergoes proteolytic processing once it is incorporated in the complex III dimer. One of the fragments, called subunit 9, corresponds to its mitochondrial targeting sequence (MTS). The proteolytic processing is necessary for the correct insertion of UQCRFS1 in the complex III dimer, but the persistence of UQCRFS1-derived fragments may prevent newly imported UQCRFS1 to be processed and assembled into complex III and is detrimental for the complex III structure and function. This chain is Cytochrome b-c1 complex subunit Rieske, mitochondrial (UQCRFS1), found in Chlorocebus aethiops (Green monkey).